The following is a 341-amino-acid chain: Phenylalanine--tRNA ligase alpha subunit (341 aa).

Glutamate 254 provides a ligand contact to Mg(2+).

This sequence belongs to the class-II aminoacyl-tRNA synthetase family. Phe-tRNA synthetase alpha subunit type 1 subfamily. Tetramer of two alpha and two beta subunits. It depends on Mg(2+) as a cofactor.

Its subcellular location is the cytoplasm. The enzyme catalyses tRNA(Phe) + L-phenylalanine + ATP = L-phenylalanyl-tRNA(Phe) + AMP + diphosphate + H(+). This is Phenylalanine--tRNA ligase alpha subunit (pheS) from Mycoplasma pneumoniae (strain ATCC 29342 / M129 / Subtype 1) (Mycoplasmoides pneumoniae).